A 78-amino-acid chain; its full sequence is Translational regulator CsrA (78 aa).

The protein belongs to the CsrA/RsmA family. As to quaternary structure, homodimer; the beta-strands of each monomer intercalate to form a hydrophobic core, while the alpha-helices form wings that extend away from the core.

Its subcellular location is the cytoplasm. In terms of biological role, a translational regulator that binds mRNA to regulate translation initiation and/or mRNA stability. Usually binds in the 5'-UTR at or near the Shine-Dalgarno sequence preventing ribosome-binding, thus repressing translation. Its main target seems to be the major flagellin gene, while its function is anatagonized by FliW. The chain is Translational regulator CsrA from Borrelia turicatae (strain 91E135).